We begin with the raw amino-acid sequence, 1580 residues long: Adhesion G protein-coupled receptor L3 (1580 aa).

A signal peptide spans 1–19; that stretch reads MWPSQLLVFMMLLAPIIHG. Residues 20–949 lie on the Extracellular side of the membrane; the sequence is GKHSERHPAL…VHDLLLDVIT (930 aa). Residues 23–81 form a disordered region; it reads SERHPALASPLRHAERGPGGALPPRHLLQQPAAERATAHRGPGPRGATRGVRGPGAHGA. Positions 103–192 constitute an SUEL-type lectin domain; the sequence is SCESYPIELR…KYLEVQYECV (90 aa). Intrachain disulfides connect cysteine 104/cysteine 134, cysteine 113/cysteine 191, cysteine 146/cysteine 178, cysteine 159/cysteine 165, and cysteine 203/cysteine 385. Asparagine 161 carries an N-linked (GlcNAc...) asparagine glycan. Residues 202–461 form the Olfactomedin-like domain; the sequence is LCPGLLKGVY…VVKYSLDFGP (260 aa). The segment at 317–347 is interaction with FLRT3; sequence YHDTSPYRWGGKSDIDLAVDENGLWVIYATE. Ca(2+) contacts are provided by aspartate 332, asparagine 380, alanine 381, and valine 435. Positions 494 to 540 are disordered; the sequence is EISTTGPLGTGSTTTSTTLRTTTWSPGRSTTPSVSGRRNRSTSTPSP. Residues 496 to 521 show a composition bias toward low complexity; that stretch reads STTGPLGTGSTTTSTTLRTTTWSPGR. A compositionally biased stretch (polar residues) spans 522 to 539; it reads STTPSVSGRRNRSTSTPS. N-linked (GlcNAc...) asparagine glycosylation is found at asparagine 532, asparagine 617, asparagine 827, asparagine 840, asparagine 885, and asparagine 911. The GAIN-B domain occupies 756–935; it reads DIVRENTDNI…AVLMAHVEVK (180 aa). 2 disulfides stabilise this stretch: cysteine 886-cysteine 917 and cysteine 905-cysteine 919. A GPS region spans residues 886–935; that stretch reads CSFWSYSKRTMTGYWSTQGCRLLTTNKTHTTCSCNHLTNFAVLMAHVEVK. A stachel region spans residues 923-939; it reads TNFAVLMAHVEVKHSDA. The chain crosses the membrane as a helical span at residues 950-970; the sequence is WVGILLSLVCLLICIFTFCFF. The Cytoplasmic segment spans residues 971 to 978; sequence RGLQSDRN. Residues 979–999 traverse the membrane as a helical segment; that stretch reads TIHKNLCISLFVAELLFLIGI. The N-linked (GlcNAc...) asparagine glycan is linked to asparagine 1000. Residues 1000–1007 are Extracellular-facing; sequence NRTDQPIA. The helical transmembrane segment at 1008 to 1028 threads the bilayer; that stretch reads CAVFAALLHFFFLAAFTWMFL. At 1029–1050 the chain is on the cytoplasmic side; that stretch reads EGVQLYIMLVEVFESEHSRRKY. The chain crosses the membrane as a helical span at residues 1051 to 1071; sequence FYLVGYGMPALIVAVSAAVDY. Residues 1072–1088 are Extracellular-facing; sequence RSYGTDKVCWLRLDTYF. Residues 1089–1109 form a helical membrane-spanning segment; it reads IWSFIGPATLIIMLNVIFLGI. Topologically, residues 1110-1142 are cytoplasmic; it reads ALYKMFHHTAILKPESGCLDNINYEDNRPFIKS. The helical transmembrane segment at 1143 to 1163 threads the bilayer; the sequence is WVIGAIALLCLLGLTWAFGLM. Residues 1164-1169 lie on the Extracellular side of the membrane; that stretch reads YINEST. An N-linked (GlcNAc...) asparagine glycan is attached at asparagine 1166. The helical transmembrane segment at 1170 to 1190 threads the bilayer; the sequence is VIMAYLFTIFNSLQGMFIFIF. The Cytoplasmic segment spans residues 1191–1580; the sequence is HCVLQKKVRK…KGPAHLVTSL (390 aa). The interval 1213–1238 is disordered; that stretch reads GRSTESSIGSGKTSGSRTPGRYSTGS. Serine 1254 carries the phosphoserine modification. The interval 1555–1580 is disordered; sequence FIVPPNKDGTPPEGSSKGPAHLVTSL. The PDZ-binding motif lies at 1575–1580; it reads HLVTSL.

This sequence belongs to the G-protein coupled receptor 2 family. LN-TM7 subfamily. In terms of assembly, heterodimer of 2 chains generated by proteolytic processing; the large extracellular N-terminal fragment and the membrane-bound C-terminal fragment predominantly remain associated and non-covalently linked. Interacts (via olfactomedin-like domain) with FLRT1 (via extracellular domain). Interacts (via olfactomedin-like domain) with FLRT2 (via extracellular domain). Interacts (via olfactomedin-like domain) with FLRT3 (via extracellular domain); the interaction is direct. Interacts (via extracellular domain) with TENM1. Interacts (via extracellular domain) with TENM2. Interacts (via extracellular domain) with TENM3. Identified in a complex with FLRT3 and UNC5B; does not interact with UNC5B by itself. Identified in a complex with FLRT3 and UNC5D; does not interact with UNC5D by itself. As to quaternary structure, interacts (via PDZ-binding motif) with SHANK3. Interacts (via PDZ-binding motif) with DLG4. Autoproteolytically processed at the GPS region of the GAIN-B domain; this cleavage modulates receptor activity. In terms of tissue distribution, brain-specific distribution but low levels are also detected in lung and spleen.

It is found in the cell membrane. The protein resides in the postsynaptic cell membrane. The protein localises to the cell projection. It localises to the axon. Its subcellular location is the cell junction. Forms a heterodimer of 2 chains generated by proteolytic processing that remain associated through non-covalent interactions mediated by the GAIN-B domain. In the inactivated receptor, the Stachel sequence (also named stalk) is embedded in the GAIN-B domain, where it adopts a beta-strand conformation. On activation, the Stachel moves into the 7 transmembrane region and adopts a twisted hook-shaped configuration that forms contacts within the receptor, leading to coupling of a G-alpha protein, which activates signaling. The cleaved GAIN-B and N-terminal domains can then dissociate from the rest of the receptor. Orphan adhesion G-protein coupled receptor (aGPCR), which mediates synapse specificity. Ligand binding causes a conformation change that triggers signaling via guanine nucleotide-binding proteins (G proteins) and modulates the activity of downstream effectors. ADGRL3 is coupled with different classes of G alpha proteins, such as G(12)/G(13), G(s), G(i) or G(q), depending on the context. Coupling to G(12)/G(13) G proteins, which mediates the activation Rho small GTPases is the most efficient. Following G-protein coupled receptor activation, associates with cell adhesion molecules that are expressed at the surface of adjacent cells to direct synapse specificity. Specifically mediates the establishment of Schaffer-collateral synapses formed by CA3-region axons on CA1-region pyramidal neurons in the hippocampus. Localizes to postsynaptic spines in excitatory synapses in the S.oriens and S.radiatum and interacts with presynaptic cell adhesion molecules FLRT3 and TENM2, promoting synapse formation. Plays a role in the development of glutamatergic synapses in the cortex. Important in determining the connectivity rates between the principal neurons in the cortex. Functionally, orphan adhesion G-protein coupled receptor (aGPCR), which mediates synapse specificity. Ligand binding causes a conformation change that triggers signaling via guanine nucleotide-binding proteins (G proteins) and modulates the activity of downstream effectors, such as adenylate cyclase. Isoform 1 is specifically coupled to G(s) G proteins and mediates activation of adenylate cyclase activity. Following G-protein coupled receptor activation, undergoes liquid-liquid phase transition, associates with (1) cell adhesion molecules that are expressed at the surface of adjacent cells, as well as (2) PDZ-containing proteins, such as SHANK3 and DLG4, in the cytoplasm to direct synapse formation. This chain is Adhesion G protein-coupled receptor L3, found in Bos taurus (Bovine).